The chain runs to 40 residues: Dolichyl-diphosphooligosaccharide--protein glycosyltransferase subunit 4 (40 aa).

The Lumenal portion of the chain corresponds to 1–4 (MITD). A helical transmembrane segment spans residues 5 to 25 (VQLAIFSNVLGVFLFLLVVAY). Residues 26 to 40 (HYINANTGKPIPKAK) lie on the Cytoplasmic side of the membrane.

Belongs to the OST4 family. Component of the oligosaccharyltransferase (OST) complex.

It localises to the endoplasmic reticulum membrane. Functionally, subunit of the oligosaccharyl transferase (OST) complex that catalyzes the initial transfer of a defined glycan (Glc(3)Man(9)GlcNAc(2) in eukaryotes) from the lipid carrier dolichol-pyrophosphate to an asparagine residue within an Asn-X-Ser/Thr consensus motif in nascent polypeptide chains, the first step in protein N-glycosylation. N-glycosylation occurs cotranslationally and the complex associates with the Sec61 complex at the channel-forming translocon complex that mediates protein translocation across the endoplasmic reticulum (ER). All subunits are required for a maximal enzyme activity. This Drosophila ananassae (Fruit fly) protein is Dolichyl-diphosphooligosaccharide--protein glycosyltransferase subunit 4.